The following is a 490-amino-acid chain: UDP-N-acetylmuramate--L-alanine ligase (490 aa).

Position 133 to 139 (133 to 139 (GTHGKTS)) interacts with ATP.

The protein belongs to the MurCDEF family.

Its subcellular location is the cytoplasm. The enzyme catalyses UDP-N-acetyl-alpha-D-muramate + L-alanine + ATP = UDP-N-acetyl-alpha-D-muramoyl-L-alanine + ADP + phosphate + H(+). Its pathway is cell wall biogenesis; peptidoglycan biosynthesis. Cell wall formation. In Saccharopolyspora erythraea (strain ATCC 11635 / DSM 40517 / JCM 4748 / NBRC 13426 / NCIMB 8594 / NRRL 2338), this protein is UDP-N-acetylmuramate--L-alanine ligase.